The chain runs to 392 residues: Enoyl-[acyl-carrier-protein] reductase [NADH] (392 aa).

NAD(+) contacts are provided by residues 46 to 51, 72 to 73, 108 to 109, and 136 to 137; these read GSSSGY, LE, DA, and VA. Tyrosine 225 contributes to the substrate binding site. Residue tyrosine 235 is the Proton donor of the active site. NAD(+) is bound by residues lysine 244 and 273-275; that span reads LVT.

This sequence belongs to the TER reductase family. Monomer.

It carries out the reaction a 2,3-saturated acyl-[ACP] + NAD(+) = a (2E)-enoyl-[ACP] + NADH + H(+). Its pathway is lipid metabolism; fatty acid biosynthesis. Functionally, involved in the final reduction of the elongation cycle of fatty acid synthesis (FAS II). Catalyzes the reduction of a carbon-carbon double bond in an enoyl moiety that is covalently linked to an acyl carrier protein (ACP). In Streptomyces avermitilis (strain ATCC 31267 / DSM 46492 / JCM 5070 / NBRC 14893 / NCIMB 12804 / NRRL 8165 / MA-4680), this protein is Enoyl-[acyl-carrier-protein] reductase [NADH].